The sequence spans 248 residues: MTIKVGVLGAKGRVGQAIVEGVNAAEDLELVASIDRGTPLEKLVESGAEVAVDFTQPASVMDNLEFCIAHGIHAVVGTTGFDSERLAKVEGWTQKEDAGNVLIAPNFAISAVLTMVFAAQAAKFFDSAEVVEYHHPNKLDAPSGTAVHTAQGIANARQEAGLDAMPDKTEQSLDGARGADVDGVHVHAVRMQGMVAHEEVIFGTQGQSLTIRQDSYDRSSFTPGVLLGVREIASHPGLTVGLEKYLGL.

Residues 9–14 (GAKGRV), 77–79 (GTT), and 104–107 (APNF) contribute to the NAD(+) site. Residue H134 is the Proton donor/acceptor of the active site. H135 is a (S)-2,3,4,5-tetrahydrodipicolinate binding site. K138 acts as the Proton donor in catalysis. Position 144 to 145 (144 to 145 (GT)) interacts with (S)-2,3,4,5-tetrahydrodipicolinate.

This sequence belongs to the DapB family.

The protein resides in the cytoplasm. The catalysed reaction is (S)-2,3,4,5-tetrahydrodipicolinate + NAD(+) + H2O = (2S,4S)-4-hydroxy-2,3,4,5-tetrahydrodipicolinate + NADH + H(+). It carries out the reaction (S)-2,3,4,5-tetrahydrodipicolinate + NADP(+) + H2O = (2S,4S)-4-hydroxy-2,3,4,5-tetrahydrodipicolinate + NADPH + H(+). It participates in amino-acid biosynthesis; L-lysine biosynthesis via DAP pathway; (S)-tetrahydrodipicolinate from L-aspartate: step 4/4. Its function is as follows. Catalyzes the conversion of 4-hydroxy-tetrahydrodipicolinate (HTPA) to tetrahydrodipicolinate. This chain is 4-hydroxy-tetrahydrodipicolinate reductase, found in Corynebacterium aurimucosum (strain ATCC 700975 / DSM 44827 / CIP 107346 / CN-1) (Corynebacterium nigricans).